The sequence spans 267 residues: Ribosomal RNA small subunit methyltransferase A (267 aa).

S-adenosyl-L-methionine contacts are provided by N18, L20, G45, E66, D91, and N112.

The protein belongs to the class I-like SAM-binding methyltransferase superfamily. rRNA adenine N(6)-methyltransferase family. RsmA subfamily.

The protein resides in the cytoplasm. It catalyses the reaction adenosine(1518)/adenosine(1519) in 16S rRNA + 4 S-adenosyl-L-methionine = N(6)-dimethyladenosine(1518)/N(6)-dimethyladenosine(1519) in 16S rRNA + 4 S-adenosyl-L-homocysteine + 4 H(+). Its function is as follows. Specifically dimethylates two adjacent adenosines (A1518 and A1519) in the loop of a conserved hairpin near the 3'-end of 16S rRNA in the 30S particle. May play a critical role in biogenesis of 30S subunits. The sequence is that of Ribosomal RNA small subunit methyltransferase A from Shewanella amazonensis (strain ATCC BAA-1098 / SB2B).